The sequence spans 415 residues: Cyclin-A2 (415 aa).

This sequence belongs to the cyclin family. Cyclin AB subfamily. As to quaternary structure, interacts with the CDK1 and CDK2 protein kinases to form serine/threonine kinase holoenzyme complexes. As to expression, ubiquitous.

It is found in the nucleus. The protein localises to the cytoplasm. Cyclin which controls both the G1/S and the G2/M transition phases of the cell cycle. Functions through the formation of specific serine/threonine kinase holoenzyme complexes with the cyclin-dependent protein kinases CDK1 and CDK2. The cyclin subunit confers the substrate specificity of these complexes and differentially interacts with and activates CDK1 and CDK2 throughout the cell cycle. The polypeptide is Cyclin-A2 (ccna2) (Xenopus laevis (African clawed frog)).